The sequence spans 411 residues: S-adenosylmethionine synthase (411 aa).

Position 15 (H15) interacts with ATP. Mg(2+) is bound at residue D17. A K(+)-binding site is contributed by E43. Positions 56 and 99 each coordinate L-methionine. Residues 99 to 109 (QSQEIAQGVDT) are flexible loop. ATP is bound by residues 179-181 (DGK), D260, 266-267 (RK), A283, and K287. Residue D260 coordinates L-methionine. K291 is an L-methionine binding site.

Belongs to the AdoMet synthase family. As to quaternary structure, homotetramer; dimer of dimers. It depends on Mg(2+) as a cofactor. Requires K(+) as cofactor.

It is found in the cytoplasm. The enzyme catalyses L-methionine + ATP + H2O = S-adenosyl-L-methionine + phosphate + diphosphate. It functions in the pathway amino-acid biosynthesis; S-adenosyl-L-methionine biosynthesis; S-adenosyl-L-methionine from L-methionine: step 1/1. Functionally, catalyzes the formation of S-adenosylmethionine (AdoMet) from methionine and ATP. The overall synthetic reaction is composed of two sequential steps, AdoMet formation and the subsequent tripolyphosphate hydrolysis which occurs prior to release of AdoMet from the enzyme. This Corynebacterium jeikeium (strain K411) protein is S-adenosylmethionine synthase.